Reading from the N-terminus, the 71-residue chain is Conotoxin PnMEKL-032 (71 aa).

The signal sequence occupies residues 1 to 19 (MQKLIILLLVAAVLMSTQA). A propeptide spanning residues 20 to 46 (LFQEKRLKEKINFLSKEKADAEKQQKR) is cleaved from the precursor. 3 disulfide bridges follow: Cys-48–Cys-62, Cys-55–Cys-66, and Cys-61–Cys-70.

It belongs to the conotoxin O2 superfamily. In terms of tissue distribution, expressed by the venom duct.

It is found in the secreted. The polypeptide is Conotoxin PnMEKL-032 (Conus pennaceus (Feathered cone)).